The primary structure comprises 84 residues: Large ribosomal subunit protein bL27 (84 aa).

This sequence belongs to the bacterial ribosomal protein bL27 family.

In Karelsulcia muelleri (strain GWSS) (Sulcia muelleri), this protein is Large ribosomal subunit protein bL27.